A 178-amino-acid polypeptide reads, in one-letter code: Ribonuclease M5 (178 aa).

Residues 4 to 100 (NEFIVVEGRD…KIGVEHADLI (97 aa)) enclose the Toprim domain. Mg(2+) contacts are provided by Glu-10, Asp-56, and Asp-58.

The protein belongs to the ribonuclease M5 family. Mg(2+) serves as cofactor.

It localises to the cytoplasm. It carries out the reaction Endonucleolytic cleavage of RNA, removing 21 and 42 nucleotides, respectively, from the 5'- and 3'-termini of a 5S-rRNA precursor.. Functionally, required for correct processing of both the 5' and 3' ends of 5S rRNA precursor. Cleaves both sides of a double-stranded region yielding mature 5S rRNA in one step. This Staphylococcus aureus (strain NCTC 8325 / PS 47) protein is Ribonuclease M5.